Consider the following 469-residue polypeptide: 3-isopropylmalate dehydratase large subunit (469 aa).

Residues C350, C410, and C413 each contribute to the [4Fe-4S] cluster site.

Belongs to the aconitase/IPM isomerase family. LeuC type 1 subfamily. In terms of assembly, heterodimer of LeuC and LeuD. The cofactor is [4Fe-4S] cluster.

It catalyses the reaction (2R,3S)-3-isopropylmalate = (2S)-2-isopropylmalate. The protein operates within amino-acid biosynthesis; L-leucine biosynthesis; L-leucine from 3-methyl-2-oxobutanoate: step 2/4. Its function is as follows. Catalyzes the isomerization between 2-isopropylmalate and 3-isopropylmalate, via the formation of 2-isopropylmaleate. In Rhodopseudomonas palustris (strain TIE-1), this protein is 3-isopropylmalate dehydratase large subunit.